A 92-amino-acid chain; its full sequence is uncharacterized protein (92 aa).

Functionally, homolog of shope fibroma virus T4A ORF. This is an uncharacterized protein from Swinepox virus (strain Kasza) (SWPV).